Consider the following 119-residue polypeptide: Ribosome-binding factor A (119 aa).

This sequence belongs to the RbfA family. As to quaternary structure, monomer. Binds 30S ribosomal subunits, but not 50S ribosomal subunits or 70S ribosomes.

The protein localises to the cytoplasm. Functionally, one of several proteins that assist in the late maturation steps of the functional core of the 30S ribosomal subunit. Associates with free 30S ribosomal subunits (but not with 30S subunits that are part of 70S ribosomes or polysomes). Required for efficient processing of 16S rRNA. May interact with the 5'-terminal helix region of 16S rRNA. This is Ribosome-binding factor A from Buchnera aphidicola subsp. Acyrthosiphon pisum (strain Tuc7).